A 167-amino-acid polypeptide reads, in one-letter code: MLSKDIIKLLNEQVNKEMNSSNLYMSMSSWCYTHSLDGAGLFLFDHAAEEYEHAKKLIIFLNENNVPVQLTSISAPEHKFEGLTQIFQKAYEHEQHISESINNIVDHAIKSKDHATFNFLQWYVAEQHEEEVLFKDILDKIELIGNENHGLYLADQYVKGIAKSRKS.

A Ferritin-like diiron domain is found at 1-145 (MLSKDIIKLL…DILDKIELIG (145 aa)). Fe cation is bound by residues Glu-17, Glu-50, His-53, Glu-94, and Gln-127.

Belongs to the ferritin family. Prokaryotic subfamily. In terms of assembly, homooligomer of 24 subunits that assemble into a spherical protein shell (12 +/- 1 nM diameter) that can sequester at least 2000 iron atoms.

The protein resides in the cytoplasm. It catalyses the reaction 4 Fe(2+) + O2 + 6 H2O = 4 iron(III) oxide-hydroxide + 12 H(+). In terms of biological role, iron-storage protein. In Helicobacter pylori (strain J99 / ATCC 700824) (Campylobacter pylori J99), this protein is Bacterial non-heme ferritin (ftnA).